Consider the following 339-residue polypeptide: Phomopsene synthase (339 aa).

Residues aspartate 89, aspartate 94, asparagine 224, serine 228, and glutamate 232 each coordinate Mg(2+).

It belongs to the terpene synthase family. Mg(2+) is required as a cofactor.

It carries out the reaction (2E,6E,10E)-geranylgeranyl diphosphate = phomopsene + diphosphate. The catalysed reaction is (2E,6E,10E)-geranylgeranyl diphosphate = allokutznerene + diphosphate. It participates in secondary metabolite biosynthesis; terpenoid biosynthesis. In terms of biological role, diterpene synthase that catalyzes the conversion of geranylgeranyl diphosphate (GGPP) to phomopsene, a diterpene previously reported from the fungus P.amygdali. Phomopsene is the main product, but the enzyme can also produce allokutznerene (about 50% of phomopsene production activity) and traces of spiroviolene. Cannot use geranyl diphosphate (GPP), farnesyl diphosphate (FPP) and geranylfarnesyl diphosphate (GFPP). The sequence is that of Phomopsene synthase from Allokutzneria albata (Kibdelosporangium albatum).